A 239-amino-acid polypeptide reads, in one-letter code: Oncostatin-M (239 aa).

A signal peptide spans 1–25 (MRAQPPPRTLLSLALALLFLSMSWA). 2 disulfide bridges follow: cysteine 29–cysteine 140 and cysteine 72–cysteine 179. The propeptide occupies 209–239 (HSPLWAWLKGDHRIRPSRSSQSAMLRSLVPR).

The protein belongs to the LIF/OSM family. Propeptide processing is not important for receptor binding activity but may be important growth-inhibitory activity. In terms of tissue distribution, widely expressed. Expressed at higher levels in liver, skin and spleen.

It localises to the secreted. Growth regulator. Inhibits the proliferation of a number of tumor cell lines. It regulates cytokine production, including IL-6, G-CSF and GM-CSF from endothelial cells. Uses only type II OSM receptor (heterodimers composed of OSMR and IL6ST). Involved in the maturation of fetal hepatocytes, thereby promoting liver development and regeneration. This Rattus norvegicus (Rat) protein is Oncostatin-M (Osm).